The primary structure comprises 625 residues: tRNA uridine 5-carboxymethylaminomethyl modification enzyme MnmG (625 aa).

FAD is bound by residues 13 to 18 (GGGHAG), valine 125, and serine 182. 276-290 (GPRYCPSIEDKITRF) contacts NAD(+). Position 373 (glutamine 373) interacts with FAD.

This sequence belongs to the MnmG family. As to quaternary structure, homodimer. Heterotetramer of two MnmE and two MnmG subunits. FAD is required as a cofactor.

The protein localises to the cytoplasm. NAD-binding protein involved in the addition of a carboxymethylaminomethyl (cmnm) group at the wobble position (U34) of certain tRNAs, forming tRNA-cmnm(5)s(2)U34. The polypeptide is tRNA uridine 5-carboxymethylaminomethyl modification enzyme MnmG (Lactococcus lactis subsp. cremoris (strain MG1363)).